A 325-amino-acid polypeptide reads, in one-letter code: uncharacterized protein (325 aa).

Positions 1 to 75 are disordered; sequence MSQPPEHPGN…PPPGYPTHLQ (75 aa). A compositionally biased stretch (pro residues) spans 24 to 70; it reads YPPPGYGAPPPPPGYGPPPGTYLPPGYNAPPPPPGYGPPPGPPPPGY. 4 helical membrane-spanning segments follow: residues 96–116, 153–173, 205–225, and 273–293; these read AVTL…VIGA, IVMF…HAGI, LLIV…GLIF, and LVGE…AALI.

Its subcellular location is the cell membrane. This is an uncharacterized protein from Mycobacterium tuberculosis (strain ATCC 25618 / H37Rv).